Here is a 395-residue protein sequence, read N- to C-terminus: MDRCKENCVSRPVKTTVPFGPKRVLVTEQIPSQNLGSASSGQAQRVLCPSNSQRVPSQAQKLGAGQKPAPKQLPAASVPRPVSRLNNPQKNEQPAASGNDSEKEQASLQKTEDTKKRQWTLEDFDIGRPLGKGKFGNVYLARERQSKFILALKVLFKTQLEKANVEHQLRREVEIQSHLRHPNILRLYGYFHDATRVYLILEYAPLGTVYRELQKLSKFDEQRTATYITELANALSYCHSKRVIHRDIKPENLLLGSNGELKIADFGWSVHAPSSRRTTMCGTLDYLPPEMIEGRMHDEKVDLWSLGVLCYEFLVGMPPFEAHTYQETYRRISRVEFTFPDFVTEGARDLISRLLKHNASQRLTLAEVLEHPWIKANSSKPPTGHTSKEPTSKSS.

The disordered stretch occupies residues 1-114 (MDRCKENCVS…QASLQKTEDT (114 aa)). 2 stretches are compositionally biased toward polar residues: residues 29 to 60 (QIPS…SQAQ) and 84 to 99 (RLNN…ASGN). Ser40 and Ser50 each carry phosphoserine. The span at 100–114 (DSEKEQASLQKTEDT) shows a compositional bias: basic and acidic residues. The region spanning 124-374 (FDIGRPLGKG…LAEVLEHPWI (251 aa)) is the Protein kinase domain. ATP contacts are provided by residues Lys134, Lys153, and 201-204 (LEYA). The Proton acceptor role is filled by Asp247. A Glycyl lysine isopeptide (Lys-Gly) (interchain with G-Cter in SUMO2) cross-link involves residue Lys249. Residues 251 to 252 (EN) and Asp265 contribute to the ATP site. The segment at 271–284 (HAPSSRRTTMCGTL) is activation segment. Residues Thr278 and Thr279 each carry the phosphothreonine modification. Ser333 carries the phosphoserine; by PKA and PAK modification. A compositionally biased stretch (polar residues) spans 376 to 385 (ANSSKPPTGH). The interval 376–395 (ANSSKPPTGHTSKEPTSKSS) is disordered. A compositionally biased stretch (basic and acidic residues) spans 386 to 395 (TSKEPTSKSS).

Belongs to the protein kinase superfamily. Ser/Thr protein kinase family. Aurora subfamily. In terms of assembly, part of a complex composed of NEDD9, AURKA and CTTN; within the complex NEDD9 acts as a scaffold protein and is required for complex formation. Identified in a complex with AUNIP and NIN. Interacts with CPEB1, JTB, TACC1, TPX2, PPP2CA, as well as with the protein phosphatase type 1 (PP1) isoforms PPP1CA, PPP1CB and PPP1CC. Also interacts with its substrates ARHGEF2, BORA, KIF2A, PARD3, and p53/TP53. Interaction with BORA promotes phosphorylation of PLK1. Interacts with GADD45A, competing with its oligomerization. Interacts with FBXL7 and CIMAP3. Interacts (via C-terminus) with AUNIP (via C-terminus). Interacts with SIRT2. Interacts with FRY; this interaction facilitates AURKA-mediated PLK1 phosphorylation. Interacts with MYCN; interaction is phospho-independent and triggers AURKA activation; AURKA competes with FBXW7 for binding to unphosphorylated MYCN but not for binding to phosphorylated MYCN. Interacts with HNRNPU. Interacts with AAAS. Interacts with KLHL18 and CUL3. Interacts with FOXP1. Interacts with HDAC6; AURKA-mediated phosphorylation of HDAC6 promotes deacetylation of alpha-tubulin. Post-translationally, activated by phosphorylation at Thr-279; this brings about a change in the conformation of the activation segment. Phosphorylation at Thr-279 varies during the cell cycle and is highest during M phase. Autophosphorylated at Thr-279 upon TPX2 binding. Thr-279 can be phosphorylated by several kinases, including PAK and PKA. Protein phosphatase type 1 (PP1) binds AURKA and inhibits its activity by dephosphorylating Thr-279 during mitosis. Phosphorylation at Ser-333 decreases the kinase activity. PPP2CA controls degradation by dephosphorylating Ser-52 at the end of mitosis. In terms of processing, ubiquitinated by the anaphase-promoting complex (APC), leading to its degradation by the proteasome. Ubiquitinated by CHFR, leading to its degradation by the proteasome. Ubiquitinated by the E3 ubiquitin-protein ligase complex SCF(FBXL7) during mitosis, leading to its degradation by the proteasome. As to expression, detected in embryonic neurons in dorsal root ganglia and brain cortex (at protein level). Highly expressed in testis, in about one third of the seminiferous tubules. Expression is restricted to specific spermatocytes nearing completion of prophase, with levels falling off on transition to elongated spermatids. Highly expressed in the ovary, expression in the oocyte starts around the transition to large growing follicle. Abundant expression is seen in the proliferating granulosa and thecal cells of the growing follicle, and in the young corpus luteum. Very weakly expressed in spleen and intestine.

The protein resides in the cytoplasm. Its subcellular location is the cytoskeleton. The protein localises to the microtubule organizing center. It is found in the centrosome. It localises to the spindle pole. The protein resides in the centriole. Its subcellular location is the cell projection. The protein localises to the neuron projection. It is found in the cilium. It localises to the cilium basal body. The protein resides in the basolateral cell membrane. It catalyses the reaction L-seryl-[protein] + ATP = O-phospho-L-seryl-[protein] + ADP + H(+). The catalysed reaction is L-threonyl-[protein] + ATP = O-phospho-L-threonyl-[protein] + ADP + H(+). Activation of CDK1, appears to be an upstream event of AURKA activation. Phosphatase inhibitor-2 (PPP1R2) and TPX2 act also as activators. Inactivated by the G2 checkpoint. Inhibited by GADD45A and p53/TP53, and through dephosphorylation by protein phosphatase type 1 (PP1). MLN8054 is also a potent and selective inhibitor. Activated during the early phase of cilia disassembly in the presence of CIMAP3. Inhibited by the small molecule inhibitor VX-680. Mitotic serine/threonine kinase that contributes to the regulation of cell cycle progression. Associates with the centrosome and the spindle microtubules during mitosis and plays a critical role in various mitotic events including the establishment of mitotic spindle, centrosome duplication, centrosome separation as well as maturation, chromosomal alignment, spindle assembly checkpoint, and cytokinesis. Required for normal spindle positioning during mitosis and for the localization of NUMA1 and DCTN1 to the cell cortex during metaphase. Required for initial activation of CDK1 at centrosomes. Phosphorylates numerous target proteins, including ARHGEF2, BORA, BRCA1, CDC25B, DLGP5, HDAC6, KIF2A, LATS2, NDEL1, PARD3, PPP1R2, PLK1, RASSF1, TACC3, p53/TP53 and TPX2. Phosphorylates MCRS1 which is required for MCRS1-mediated kinetochore fiber assembly and mitotic progression. Regulates KIF2A tubulin depolymerase activity. Required for normal axon formation. Plays a role in microtubule remodeling during neurite extension. Important for microtubule formation and/or stabilization. Also acts as a key regulatory component of the p53/TP53 pathway, and particularly the checkpoint-response pathways critical for oncogenic transformation of cells, by phosphorylating and destabilizing p53/TP53. Phosphorylates its own inhibitors, the protein phosphatase type 1 (PP1) isoforms, to inhibit their activity. Inhibits cilia outgrowth. Required for cilia disassembly via phosphorylation of HDAC6 and subsequent deacetylation of alpha-tubulin. Regulates protein levels of the anti-apoptosis protein BIRC5 by suppressing the expression of the SCF(FBXL7) E3 ubiquitin-protein ligase substrate adapter FBXL7 through the phosphorylation of the transcription factor FOXP1. The polypeptide is Aurora kinase A (Aurka) (Mus musculus (Mouse)).